We begin with the raw amino-acid sequence, 65 residues long: Neuropeptide-like protein 28 (65 aa).

Positions 1 to 22 (MISTSSILILVFLLACFMATSA) are cleaved as a signal peptide. Tyr29, Tyr39, Tyr47, and Tyr55 each carry tyrosine amide. The residue at position 63 (Trp63) is a Tryptophan amide.

The protein belongs to the YARP (YGGW-amide related peptide) family.

It localises to the secreted. In terms of biological role, may have antimicrobial activity. The protein is Neuropeptide-like protein 28 (nlp-28) of Caenorhabditis elegans.